Reading from the N-terminus, the 412-residue chain is Peptidase T (412 aa).

Position 81 (histidine 81) interacts with Zn(2+). The active site involves aspartate 83. Aspartate 144 lines the Zn(2+) pocket. Residue glutamate 178 is the Proton acceptor of the active site. Residues glutamate 179, aspartate 201, and histidine 383 each contribute to the Zn(2+) site.

Belongs to the peptidase M20B family. Zn(2+) is required as a cofactor.

The protein localises to the cytoplasm. The enzyme catalyses Release of the N-terminal residue from a tripeptide.. Functionally, cleaves the N-terminal amino acid of tripeptides. This Bacillus cereus (strain Q1) protein is Peptidase T.